Reading from the N-terminus, the 1199-residue chain is DNA-directed RNA polymerase subunit beta' (1199 aa).

The Zn(2+) site is built by cysteine 60, cysteine 62, cysteine 75, and cysteine 78. Mg(2+) is bound by residues aspartate 449, aspartate 451, and aspartate 453. The Zn(2+) site is built by cysteine 818, cysteine 892, cysteine 899, and cysteine 902.

Belongs to the RNA polymerase beta' chain family. In terms of assembly, the RNAP catalytic core consists of 2 alpha, 1 beta, 1 beta' and 1 omega subunit. When a sigma factor is associated with the core the holoenzyme is formed, which can initiate transcription. The cofactor is Mg(2+). Zn(2+) serves as cofactor.

The enzyme catalyses RNA(n) + a ribonucleoside 5'-triphosphate = RNA(n+1) + diphosphate. Functionally, DNA-dependent RNA polymerase catalyzes the transcription of DNA into RNA using the four ribonucleoside triphosphates as substrates. The protein is DNA-directed RNA polymerase subunit beta' of Exiguobacterium sibiricum (strain DSM 17290 / CCUG 55495 / CIP 109462 / JCM 13490 / 255-15).